The sequence spans 125 residues: UPF0389 protein CG9231 (125 aa).

Residues 69 to 88 (IRLANIMIALTAVGCAIMVY) traverse the membrane as a helical segment. N-linked (GlcNAc...) asparagine glycosylation occurs at asparagine 112.

The protein belongs to the UPF0389 family.

The protein resides in the membrane. This is UPF0389 protein CG9231 from Drosophila melanogaster (Fruit fly).